The sequence spans 442 residues: Mannosylglycerate hydrolase (442 aa).

Substrate contacts are provided by residues Tyr-38, 42-45 (WSWD), Tyr-90, Gln-116, and Gly-176. Asp-178 functions as the Proton donor in the catalytic mechanism. Substrate-binding positions include Arg-213 and 369 to 370 (YW). Residue Glu-413 is the Proton acceptor of the active site.

Belongs to the glycosyl hydrolase 63 family. In terms of assembly, homodimer in solution.

It carries out the reaction (2R)-2-O-(alpha-D-mannosyl)-glycerate + H2O = D-mannose + (R)-glycerate. The enzyme catalyses (2R)-2-O-(alpha-D-glucopyranosyl)-glycerate + H2O = (R)-glycerate + D-glucose. Activity is not stimulated by divalent cations and not affected in the presence of EDTA. Hydrolase that catalyzes the hydrolysis of mannosylglycerate (MG), a solute produced in response to osmotic stress in thermophiles, into mannose and glycerate. Can also hydrolyze glucosylglycerate (GG) to glucose and glycerate, with similar catalytic efficiency. Is highly specific for MG and GG, and cannot use mannosylglyceramide (MGA), glucosylglycerol, mannosylglucosylglycerate (MGG), glucosylglucosylglycerate (GGG) or trehalose as substrates. This Rubrobacter radiotolerans (Arthrobacter radiotolerans) protein is Mannosylglycerate hydrolase.